Here is a 291-residue protein sequence, read N- to C-terminus: GTPase Era (291 aa).

One can recognise an Era-type G domain in the interval 2–167 (KSGFVSIIGR…LDEIVKYLDE (166 aa)). A G1 region spans residues 10–17 (GRTNAGKS). GTP is bound at residue 10 to 17 (GRTNAGKS). The segment at 36–40 (NATRR) is G2. The tract at residues 57-60 (DTPG) is G3. GTP contacts are provided by residues 57–61 (DTPGL) and 116–119 (NKVD). Residues 116–119 (NKVD) form a G4 region. The segment at 146–148 (YSS) is G5. In terms of domain architecture, KH type-2 spans 186–274 (YRDFILESIY…LLKLFVTVKK (89 aa)).

It belongs to the TRAFAC class TrmE-Era-EngA-EngB-Septin-like GTPase superfamily. Era GTPase family. As to quaternary structure, monomer.

The protein resides in the cytoplasm. Its subcellular location is the cell inner membrane. An essential GTPase that binds both GDP and GTP, with rapid nucleotide exchange. Plays a role in 16S rRNA processing and 30S ribosomal subunit biogenesis and possibly also in cell cycle regulation and energy metabolism. This Campylobacter jejuni (strain RM1221) protein is GTPase Era.